Consider the following 272-residue polypeptide: Ribosomal RNA small subunit methyltransferase A (272 aa).

Residues Asn27, Leu29, Gly54, Glu75, Asp97, and Asn117 each contribute to the S-adenosyl-L-methionine site.

It belongs to the class I-like SAM-binding methyltransferase superfamily. rRNA adenine N(6)-methyltransferase family. RsmA subfamily.

It localises to the cytoplasm. It catalyses the reaction adenosine(1518)/adenosine(1519) in 16S rRNA + 4 S-adenosyl-L-methionine = N(6)-dimethyladenosine(1518)/N(6)-dimethyladenosine(1519) in 16S rRNA + 4 S-adenosyl-L-homocysteine + 4 H(+). Its function is as follows. Specifically dimethylates two adjacent adenosines (A1518 and A1519) in the loop of a conserved hairpin near the 3'-end of 16S rRNA in the 30S particle. May play a critical role in biogenesis of 30S subunits. In Malacoplasma penetrans (strain HF-2) (Mycoplasma penetrans), this protein is Ribosomal RNA small subunit methyltransferase A.